The following is a 421-amino-acid chain: Serine protease HTRA2, mitochondrial (421 aa).

The helical transmembrane segment at 63–81 (VIRFFVPFSLGALASTMVA) threads the bilayer. Residues 74–77 (ALAS) carry the IAP-binding motif. Residues 138–301 (SNGSGFVIEQ…IPIDYVKVFL (164 aa)) form a serine protease region. Residues H156, D188, and S265 each act as charge relay system in the active site. The PDZ domain occupies 324 to 409 (MGITMLTLTP…ELDIVILRGV (86 aa)).

It belongs to the peptidase S1C family. Interacts with th/DIAP1 (via BIR 2 domain).

It is found in the mitochondrion intermembrane space. The protein resides in the mitochondrion membrane. It carries out the reaction Cleavage of non-polar aliphatic amino-acids at the P1 position, with a preference for Val, Ile and Met. At the P2 and P3 positions, Arg is selected most strongly with a secondary preference for other hydrophilic residues.. Its function is as follows. Serine protease that shows proteolytic activity against a non-specific substrate beta-casein. Promotes or induces cell death either by direct binding to and inhibition of BIRC proteins (also called inhibitor of apoptosis proteins, IAPs), leading to an increase in caspase activity, or by a BIRC inhibition-independent, caspase-independent and serine protease activity-dependent mechanism. Can antagonize antiapoptotic activity of th/Diap1 by directly inducing the degradation of th/Diap1. The sequence is that of Serine protease HTRA2, mitochondrial from Drosophila virilis (Fruit fly).